We begin with the raw amino-acid sequence, 363 residues long: 3-isopropylmalate dehydrogenase (363 aa).

78–91 (GPKWEHLPPAEQPE) contacts NAD(+). 4 residues coordinate substrate: arginine 99, arginine 109, arginine 138, and aspartate 227. 3 residues coordinate Mg(2+): aspartate 227, aspartate 251, and aspartate 255. 285 to 297 (GSAPDIAGKDIAN) provides a ligand contact to NAD(+).

It belongs to the isocitrate and isopropylmalate dehydrogenases family. LeuB type 1 subfamily. As to quaternary structure, homodimer. Mg(2+) is required as a cofactor. The cofactor is Mn(2+).

The protein resides in the cytoplasm. It carries out the reaction (2R,3S)-3-isopropylmalate + NAD(+) = 4-methyl-2-oxopentanoate + CO2 + NADH. Its pathway is amino-acid biosynthesis; L-leucine biosynthesis; L-leucine from 3-methyl-2-oxobutanoate: step 3/4. Catalyzes the oxidation of 3-carboxy-2-hydroxy-4-methylpentanoate (3-isopropylmalate) to 3-carboxy-4-methyl-2-oxopentanoate. The product decarboxylates to 4-methyl-2 oxopentanoate. The chain is 3-isopropylmalate dehydrogenase from Pectobacterium atrosepticum (strain SCRI 1043 / ATCC BAA-672) (Erwinia carotovora subsp. atroseptica).